We begin with the raw amino-acid sequence, 148 residues long: Large ribosomal subunit protein bL9 (148 aa).

The protein belongs to the bacterial ribosomal protein bL9 family.

Binds to the 23S rRNA. The polypeptide is Large ribosomal subunit protein bL9 (Pseudomonas fluorescens (strain Pf0-1)).